A 440-amino-acid chain; its full sequence is Trigger factor (440 aa).

In terms of domain architecture, PPIase FKBP-type spans 162–247 (GDRVTFDFTG…LKKIEKFQLP (86 aa)).

This sequence belongs to the FKBP-type PPIase family. Tig subfamily.

The protein resides in the cytoplasm. It carries out the reaction [protein]-peptidylproline (omega=180) = [protein]-peptidylproline (omega=0). Involved in protein export. Acts as a chaperone by maintaining the newly synthesized protein in an open conformation. Functions as a peptidyl-prolyl cis-trans isomerase. In Hamiltonella defensa subsp. Acyrthosiphon pisum (strain 5AT), this protein is Trigger factor.